The following is a 549-amino-acid chain: Chaperonin GroEL (549 aa).

ATP contacts are provided by residues 29–32 (TAGP), K50, 86–90 (DGTTT), G418, and D499.

The protein belongs to the chaperonin (HSP60) family. In terms of assembly, forms a cylinder of 14 subunits composed of two heptameric rings stacked back-to-back. Interacts with the co-chaperonin GroES.

It localises to the cytoplasm. The catalysed reaction is ATP + H2O + a folded polypeptide = ADP + phosphate + an unfolded polypeptide.. Its function is as follows. Together with its co-chaperonin GroES, plays an essential role in assisting protein folding. The GroEL-GroES system forms a nano-cage that allows encapsulation of the non-native substrate proteins and provides a physical environment optimized to promote and accelerate protein folding. This chain is Chaperonin GroEL, found in Wolbachia pipientis wMel.